The following is a 201-amino-acid chain: Protein TV1384 (201 aa).

The AMMECR1 domain occupies D11–Q200.

This Thermoplasma volcanium (strain ATCC 51530 / DSM 4299 / JCM 9571 / NBRC 15438 / GSS1) protein is Protein TV1384.